The primary structure comprises 32 residues: Basic phospholipase A2 (32 aa).

Y26, G28, and G30 together coordinate Ca(2+).

The protein belongs to the phospholipase A2 family. Group II subfamily. The cofactor is Ca(2+). In terms of tissue distribution, expressed by the venom gland.

It is found in the secreted. The enzyme catalyses a 1,2-diacyl-sn-glycero-3-phosphocholine + H2O = a 1-acyl-sn-glycero-3-phosphocholine + a fatty acid + H(+). Snake venom phospholipase A2 (PLA2) that inhibits neuromuscular transmission by blocking acetylcholine release from the nerve termini. PLA2 catalyzes the calcium-dependent hydrolysis of the 2-acyl groups in 3-sn-phosphoglycerides. The sequence is that of Basic phospholipase A2 from Gloydius halys (Chinese water mocassin).